A 518-amino-acid chain; its full sequence is Kelch repeat and BTB domain-containing protein 4 (518 aa).

Positions A45 to A112 constitute a BTB domain. The region spanning C147–H239 is the BACK domain. Kelch repeat units lie at residues H239–G285, D286–G328, A331–G378, I380–D430, and V432–D481.

As to quaternary structure, component of the BCR(KBTBD4) E3 ubiquitin ligase complex, at least composed of CUL3, KBTBD4 and RBX1.

Its function is as follows. Substrate-specific adapter of a BCR (BTB-CUL3-RBX1) E3 ubiquitin ligase complex which targets CoREST corepressor complex components RCOR1, KDM1A/LSD1 and HDAC2 for proteasomal degradation. RCOR1 is likely to be the primary target while degradation of KDM1A and HDAC2 is likely due to their association with RCOR1. Also targets RCOR3, MIER2 and MIER3 for proteasomal degradation as well as associated proteins ZNF217 and RREB1. Degradation is dependent on the presence of an ELM2 domain in the target proteins. The protein is Kelch repeat and BTB domain-containing protein 4 (KBTBD4) of Pongo abelii (Sumatran orangutan).